A 184-amino-acid chain; its full sequence is Helix-loop-helix protein ngn-1 (184 aa).

The disordered stretch occupies residues 1-55 (MYHHSPFYPHHLQTGEQDLDMERENDMDQNSKNSTQKPVKREKRRYRCRKRSPAT). The span at 28–37 (DQNSKNSTQK) shows a compositional bias: polar residues. Residues 38-52 (PVKREKRRYRCRKRS) show a composition bias toward basic residues. Residues 62–75 (VRRDKANARERRRM) are basic motif. Residues 62 to 114 (VRRDKANARERRRMNSLNDALEHLRGILPALPDEPKMTKIETLRKAQEYIASL) enclose the bHLH domain. Residues 76–114 (NSLNDALEHLRGILPALPDEPKMTKIETLRKAQEYIASL) are helix-loop-helix motif. The disordered stretch occupies residues 164 to 184 (SNPPSQMYYHHHHQSPSFPHH). Residues 172–184 (YHHHHQSPSFPHH) are compositionally biased toward basic residues.

In terms of assembly, interacts with hlh-2; the interaction is direct.

The protein resides in the nucleus. In terms of biological role, acts as a transcriptional regulator. Regulates expression of various genes, including homeobox protein unc-42 and helix-loop-helix protein hlh-34. Required for embryonic viability, neuromuscular development, organization of the nerve ring and neuronal cell body location. Regulates AIY neuron axon morphology and cell fate. Plays a role in cell autonomously establishing a neuronal left-right asymmetry. Involved in regulating glial specification. The protein is Helix-loop-helix protein ngn-1 of Caenorhabditis elegans.